Reading from the N-terminus, the 366-residue chain is Chorismate synthase (366 aa).

NADP(+)-binding residues include arginine 48 and arginine 54. FMN is bound by residues 125–127 (RSS), 238–239 (NA), glycine 278, 293–297 (KPTSS), and arginine 319.

The protein belongs to the chorismate synthase family. As to quaternary structure, homotetramer. The cofactor is FMNH2.

It carries out the reaction 5-O-(1-carboxyvinyl)-3-phosphoshikimate = chorismate + phosphate. The protein operates within metabolic intermediate biosynthesis; chorismate biosynthesis; chorismate from D-erythrose 4-phosphate and phosphoenolpyruvate: step 7/7. Functionally, catalyzes the anti-1,4-elimination of the C-3 phosphate and the C-6 proR hydrogen from 5-enolpyruvylshikimate-3-phosphate (EPSP) to yield chorismate, which is the branch point compound that serves as the starting substrate for the three terminal pathways of aromatic amino acid biosynthesis. This reaction introduces a second double bond into the aromatic ring system. The chain is Chorismate synthase from Neisseria meningitidis serogroup A / serotype 4A (strain DSM 15465 / Z2491).